We begin with the raw amino-acid sequence, 431 residues long: Citrate synthase 1 (431 aa).

Active-site residues include H309 and D366.

Belongs to the citrate synthase family. In terms of assembly, homohexamer.

The catalysed reaction is oxaloacetate + acetyl-CoA + H2O = citrate + CoA + H(+). It participates in carbohydrate metabolism; tricarboxylic acid cycle; isocitrate from oxaloacetate: step 1/2. The chain is Citrate synthase 1 (gltA2) from Mycobacterium tuberculosis (strain CDC 1551 / Oshkosh).